We begin with the raw amino-acid sequence, 89 residues long: Phytosulfokines 1 (89 aa).

Residues 1–22 form the signal peptide; sequence MVNPGRTARALCLLCLALLLLG. Residues 23–79 constitute a propeptide that is removed on maturation; that stretch reads QDTHSRKLLLQEKHSHGVGNGTTTTQEPSRENGGSTGSNNNGQLQFDSAKWEEFHTD. The segment at 33–68 is disordered; the sequence is QEKHSHGVGNGTTTTQEPSRENGGSTGSNNNGQLQF. N-linked (GlcNAc...) asparagine glycosylation is present at N42. Sulfotyrosine occurs at positions 80 and 82. The propeptide occupies 85–89; that stretch reads DVKNP.

The protein belongs to the phytosulfokine family. Sulfation is important for activity and for the binding to a putative membrane receptor. In terms of processing, PSK-alpha is produced by endopeptidase digestion. PSK-beta is produced from PSK-alpha by exopeptidase digestion. As to expression, expressed throughout the seedling. More abundant in fragments containing shoot or root apexes where cells proliferate vigorously.

It is found in the secreted. Functionally, promotes plant cell differentiation, organogenesis and somatic embryogenesis as well as cell proliferation. The sequence is that of Phytosulfokines 1 (PSK1) from Oryza sativa subsp. indica (Rice).